We begin with the raw amino-acid sequence, 681 residues long: Envelope glycoprotein (681 aa).

The N-terminal stretch at methionine 1–threonine 18 is a signal peptide. The Extracellular portion of the chain corresponds to leucine 19 to aspartate 648. A receptor-binding region spans residues serine 38 to histidine 188. 8 N-linked (GlcNAc...) asparagine; by host glycosylation sites follow: asparagine 94, asparagine 171, asparagine 190, asparagine 202, asparagine 207, asparagine 219, asparagine 223, and asparagine 255. The disordered stretch occupies residues lysine 222–threonine 424. 3 stretches are compositionally biased toward polar residues: residues leucine 244–proline 259, proline 278–leucine 290, and glycine 308–proline 331. The mucin-like region stretch occupies residues glutamate 277–proline 455. Residues asparagine 310, asparagine 313, asparagine 326, asparagine 337, asparagine 344, asparagine 345, asparagine 350, asparagine 360, asparagine 397, asparagine 408, asparagine 422, and asparagine 487 are each glycosylated (N-linked (GlcNAc...) asparagine; by host). Over residues asparagine 337–serine 347 the composition is skewed to low complexity. A compositionally biased stretch (polar residues) spans lysine 348–glutamate 388. Low complexity predominate over residues asparagine 389–threonine 424. The segment at glycine 529 to isoleucine 549 is fusion peptide. 2 N-linked (GlcNAc...) asparagine; by host glycosylation sites follow: asparagine 564 and asparagine 619. Residues tryptophan 649–leucine 669 traverse the membrane as a helical segment. The Cytoplasmic segment spans residues serine 670–glycine 681. Residues cysteine 671 and cysteine 673 are each lipidated (S-palmitoyl cysteine; by host).

The protein belongs to the filoviruses glycoprotein family. Homotrimer; each monomer consists of a GP1 and a GP2 subunit linked by disulfide bonds. The resulting peplomers (GP1,2) protrude from the virus surface as spikes. GP1,2 interacts with human CD209 and CLEC4M (collectively referred to as DC-SIGN(R)). Asialoglycoprotein receptor (ASGP-R) may be a liver-specific receptor for GP1,2. Members of the Tyro3 receptor tyrosine kinase family may be cell entry factors interacting with GP1,2. Post-translationally, N-glycosylated. In terms of processing, O-glycosylated in the mucin-like region. Specific enzymatic cleavages in vivo yield mature proteins. The precursor is processed into GP1 and GP2 by host cell furin in the trans Golgi, and maybe by other host proteases, to yield the mature GP1 and GP2 proteins. The cleavage site corresponds to the furin optimal cleavage sequence [KR]-X-[KR]-R. Post-translationally, GP1 is phosphorylated on serine residues between residues 260 and 273.

The protein resides in the virion membrane. Its subcellular location is the host cell membrane. Functionally, GP1 is responsible for binding to the receptor(s) on target cells. Interacts with CD209/DC-SIGN and CLEC4M/DC-SIGNR which act as cofactors for virus entry into the host cell. Binding to CD209 and CLEC4M, which are respectively found on dendritic cells (DCs), and on endothelial cells of liver sinusoids and lymph node sinuses, facilitate infection of macrophages and endothelial cells. These interactions not only facilitate virus cell entry, but also allow capture of viral particles by DCs and subsequent transmission to susceptible cells without DCs infection (trans infection). Its function is as follows. GP2 acts as a class I viral fusion protein. Under the current model, the protein has at least 3 conformational states: pre-fusion native state, pre-hairpin intermediate state, and post-fusion hairpin state. During viral and target cell membrane fusion, the coiled coil regions (heptad repeats) assume a trimer-of-hairpins structure, positioning the fusion peptide in close proximity to the C-terminal region of the ectodomain. The formation of this structure appears to drive apposition and subsequent fusion of viral and target cell membranes. Responsible for penetration of the virus into the cell cytoplasm by mediating the fusion of the membrane of the endocytosed virus particle with the endosomal membrane. Low pH in endosomes induces an irreversible conformational change in GP2, releasing the fusion hydrophobic peptide. This is Envelope glycoprotein (GP) from Chlorocebus aethiops (Green monkey).